The sequence spans 389 residues: (2R)-sulfolactate sulfo-lyase subunit beta (389 aa).

Belongs to the UxaA family. In terms of assembly, (2R)-sulfolactate sulfo-lyase is composed of a SuyA and a SuyB subunit.

Its subcellular location is the cytoplasm. The catalysed reaction is (2R)-3-sulfolactate = sulfite + pyruvate + H(+). Its function is as follows. Together with SuyA, desulfonates sulfolactate to pyruvate and sulfite. The polypeptide is (2R)-sulfolactate sulfo-lyase subunit beta (suyB) (Chromohalobacter salexigens (strain ATCC BAA-138 / DSM 3043 / CIP 106854 / NCIMB 13768 / 1H11)).